The chain runs to 1102 residues: DNA-directed RNA polymerase subunit beta (1102 aa).

Residues 1076 to 1102 (IDSQRRAPNRPTYESLHTEEDLEEEEV) form a disordered region.

Belongs to the RNA polymerase beta chain family. As to quaternary structure, in cyanobacteria the RNAP catalytic core is composed of 2 alpha, 1 beta, 1 beta', 1 gamma and 1 omega subunit. When a sigma factor is associated with the core the holoenzyme is formed, which can initiate transcription.

The catalysed reaction is RNA(n) + a ribonucleoside 5'-triphosphate = RNA(n+1) + diphosphate. Its function is as follows. DNA-dependent RNA polymerase catalyzes the transcription of DNA into RNA using the four ribonucleoside triphosphates as substrates. The protein is DNA-directed RNA polymerase subunit beta of Synechocystis sp. (strain ATCC 27184 / PCC 6803 / Kazusa).